The chain runs to 383 residues: 8-amino-7-oxononanoate synthase (383 aa).

Arg23 is a substrate binding site. Residue 110 to 111 coordinates pyridoxal 5'-phosphate; it reads GF. His135 provides a ligand contact to substrate. Residues Ser181, His209, and Thr235 each coordinate pyridoxal 5'-phosphate. Position 238 is an N6-(pyridoxal phosphate)lysine (Lys238). Thr351 provides a ligand contact to substrate.

Belongs to the class-II pyridoxal-phosphate-dependent aminotransferase family. BioF subfamily. In terms of assembly, homodimer. Pyridoxal 5'-phosphate serves as cofactor.

It catalyses the reaction 6-carboxyhexanoyl-[ACP] + L-alanine + H(+) = (8S)-8-amino-7-oxononanoate + holo-[ACP] + CO2. It participates in cofactor biosynthesis; biotin biosynthesis. Catalyzes the decarboxylative condensation of pimeloyl-[acyl-carrier protein] and L-alanine to produce 8-amino-7-oxononanoate (AON), [acyl-carrier protein], and carbon dioxide. The sequence is that of 8-amino-7-oxononanoate synthase from Aliivibrio fischeri (strain MJ11) (Vibrio fischeri).